We begin with the raw amino-acid sequence, 425 residues long: Riboflavin biosynthesis protein RibBA (425 aa).

Residues M1–K204 are DHBP synthase. Residues R28–E29, D33, R141–T145, and E165 contribute to the D-ribulose 5-phosphate site. E29 contributes to the Mg(2+) binding site. Residue H144 coordinates Mg(2+). Positions H205–L425 are GTP cyclohydrolase II. R259–E263 is a GTP binding site. 3 residues coordinate Zn(2+): C264, C275, and C277. GTP-binding positions include Q280, E303 to R305, and T325. Residue D337 is the Proton acceptor; for GTP cyclohydrolase activity of the active site. R339 acts as the Nucleophile; for GTP cyclohydrolase activity in catalysis. The GTP site is built by T360 and K365.

The protein in the N-terminal section; belongs to the DHBP synthase family. This sequence in the C-terminal section; belongs to the GTP cyclohydrolase II family. Requires Mg(2+) as cofactor. It depends on Mn(2+) as a cofactor. Zn(2+) is required as a cofactor.

The catalysed reaction is D-ribulose 5-phosphate = (2S)-2-hydroxy-3-oxobutyl phosphate + formate + H(+). It carries out the reaction GTP + 4 H2O = 2,5-diamino-6-hydroxy-4-(5-phosphoribosylamino)-pyrimidine + formate + 2 phosphate + 3 H(+). It functions in the pathway cofactor biosynthesis; riboflavin biosynthesis; 2-hydroxy-3-oxobutyl phosphate from D-ribulose 5-phosphate: step 1/1. The protein operates within cofactor biosynthesis; riboflavin biosynthesis; 5-amino-6-(D-ribitylamino)uracil from GTP: step 1/4. Its function is as follows. Catalyzes the conversion of D-ribulose 5-phosphate to formate and 3,4-dihydroxy-2-butanone 4-phosphate. Functionally, catalyzes the conversion of GTP to 2,5-diamino-6-ribosylamino-4(3H)-pyrimidinone 5'-phosphate (DARP), formate and pyrophosphate. This is Riboflavin biosynthesis protein RibBA from Mycobacterium ulcerans (strain Agy99).